A 592-amino-acid chain; its full sequence is Aspartate--tRNA(Asp/Asn) ligase (592 aa).

Glu172 contributes to the L-aspartate binding site. The tract at residues 196–199 is aspartate; the sequence is QLFK. Residue Arg218 participates in L-aspartate binding. ATP-binding positions include 218 to 220 and Gln227; that span reads RDE. Residue His442 participates in L-aspartate binding. Glu476 provides a ligand contact to ATP. L-aspartate is bound at residue Arg483. 528 to 531 is an ATP binding site; sequence GWDR. A disordered region spans residues 553–592; it reads SGTDPLTGAPTPITPEQRKEAGIDADPYAAAGRPPGRQSA.

Belongs to the class-II aminoacyl-tRNA synthetase family. Type 1 subfamily. As to quaternary structure, homodimer.

It localises to the cytoplasm. The enzyme catalyses tRNA(Asx) + L-aspartate + ATP = L-aspartyl-tRNA(Asx) + AMP + diphosphate. Its function is as follows. Aspartyl-tRNA synthetase with relaxed tRNA specificity since it is able to aspartylate not only its cognate tRNA(Asp) but also tRNA(Asn). Reaction proceeds in two steps: L-aspartate is first activated by ATP to form Asp-AMP and then transferred to the acceptor end of tRNA(Asp/Asn). The polypeptide is Aspartate--tRNA(Asp/Asn) ligase (Acidothermus cellulolyticus (strain ATCC 43068 / DSM 8971 / 11B)).